A 355-amino-acid polypeptide reads, in one-letter code: NADH-quinone oxidoreductase subunit H (355 aa).

A run of 8 helical transmembrane segments spans residues 25–45, 91–111, 126–146, 170–190, 205–225, 252–272, 290–310, and 330–350; these read IVRI…LILW, WLYL…WAVI, LLYA…AGWA, MGFA…SEIV, FLSW…ISGI, GMAF…ISAL, FIPG…VFIW, and VFLP…MSPL.

The protein belongs to the complex I subunit 1 family. NDH-1 is composed of 14 different subunits. Subunits NuoA, H, J, K, L, M, N constitute the membrane sector of the complex.

It is found in the cell inner membrane. The catalysed reaction is a quinone + NADH + 5 H(+)(in) = a quinol + NAD(+) + 4 H(+)(out). In terms of biological role, NDH-1 shuttles electrons from NADH, via FMN and iron-sulfur (Fe-S) centers, to quinones in the respiratory chain. The immediate electron acceptor for the enzyme in this species is believed to be ubiquinone. Couples the redox reaction to proton translocation (for every two electrons transferred, four hydrogen ions are translocated across the cytoplasmic membrane), and thus conserves the redox energy in a proton gradient. This subunit may bind ubiquinone. In Burkholderia lata (strain ATCC 17760 / DSM 23089 / LMG 22485 / NCIMB 9086 / R18194 / 383), this protein is NADH-quinone oxidoreductase subunit H.